The primary structure comprises 123 residues: Ribonuclease P protein component (123 aa).

This sequence belongs to the RnpA family. In terms of assembly, consists of a catalytic RNA component (M1 or rnpB) and a protein subunit.

The catalysed reaction is Endonucleolytic cleavage of RNA, removing 5'-extranucleotides from tRNA precursor.. Its function is as follows. RNaseP catalyzes the removal of the 5'-leader sequence from pre-tRNA to produce the mature 5'-terminus. It can also cleave other RNA substrates such as 4.5S RNA. The protein component plays an auxiliary but essential role in vivo by binding to the 5'-leader sequence and broadening the substrate specificity of the ribozyme. This chain is Ribonuclease P protein component, found in Bordetella bronchiseptica (strain ATCC BAA-588 / NCTC 13252 / RB50) (Alcaligenes bronchisepticus).